A 220-amino-acid polypeptide reads, in one-letter code: Large ribosomal subunit protein uL16 (220 aa).

The protein belongs to the universal ribosomal protein uL16 family. Component of the small ribosomal subunit. Mature ribosomes consist of a small (40S) and a large (60S) subunit. The 40S subunit contains about 33 different proteins and 1 molecule of RNA (18S). The 60S subunit contains about 49 different proteins and 3 molecules of RNA (25S, 5.8S and 5S).

The protein is Large ribosomal subunit protein uL16 (RPL10) of Vitis riparia (Frost grape).